A 520-amino-acid chain; its full sequence is Cell adhesion molecule CEACAM2 (520 aa).

The N-terminal stretch at 1 to 34 (MELASAHLHKGQVPWFGLLLTASLLASWSPPTTA) is a signal peptide. The Ig-like V-type domain occupies 35–141 (QVTVMAFPLH…RVLTGQFHVH (107 aa)). Over 35 to 422 (QVTVMAFPLH…IFDSTYDISD (388 aa)) the chain is Extracellular. Residues Asn87, Asn104, Asn148, Asn152, Asn175, Asn199, Asn206, Asn210, Asn226, Asn258, Asn290, Asn294, Asn304, Asn317, Asn333, and Asn361 are each glycosylated (N-linked (GlcNAc...) asparagine). Ig-like C2-type domains lie at 145–234 (LKSN…FSLN), 239–319 (PDTP…KNIT), and 327–411 (PSLQ…IKLE). A disulfide bridge connects residues Cys167 and Cys217. Residues Cys261 and Cys301 are joined by a disulfide bond. Residues Cys346 and Cys394 are joined by a disulfide bond. A helical transmembrane segment spans residues 423-443 (VPIAVIITGAVAGVILIAGLA). The Cytoplasmic segment spans residues 444–520 (YRLCSRKSRW…ETVYSEVKKK (77 aa)). Residues 457-520 (QRDLTEHKPS…ETVYSEVKKK (64 aa)) form a disordered region. Residues 466-480 (SASNHNLAPSDNSPN) are compositionally biased toward polar residues. Tyr487 is modified (phosphotyrosine). Polar residues predominate over residues 490-513 (LNFNSQQPNRPTSAPSSPRATETV). Ser502 carries the post-translational modification Phosphoserine. At Tyr514 the chain carries Phosphotyrosine.

Belongs to the immunoglobulin superfamily. CEA family. In terms of assembly, interacts weakly with MHV spike protein in tissue culture. Isoform 2 is detected in elongating spermatids within the seminiferous epithelium (at protein level). Expressed in kidney, colon, uterus, gut mononuclear cells, crypt epithelia of intestinal tissues, and to a lesser extent, in spleen. Expressed in brain including VMH, globus pallidus, ventral pallidum, striatum, olfactory bulb and hippocampus. Also detected in rectal carcinoma cell line CMT93. Isoform 2 and isoform 3 are expressed in testis. Isoform 2 is detected in seminiferous tubule, not detected in epididymal spermatozoa. Also not observed on spermatogonia, spermatocytes, round spermatids or somatic Sertoli cells. During stages I-VII of spermatogenesis, detected on the elongating spermatids. At spermiation (stage VIII) and subsequent stages IX-XII, levels are drastically reduced or absent in the seminiferous tubules. Sometimes weakly detected in the apical region of stage-VIII seminiferous epithelium. Isoform 2 level is very low in stomach, kidney, intestine, liver and spleen.

Its subcellular location is the cell membrane. In terms of biological role, controls energy balance and peripheral insulin action. Involved in the regulation of feeding behavior particularly in the ventromedial nucleus of hypothalamus (VMH) regulation of food intake. Has a role in the regulation of metabolic rate and insulin sensitivity or resistance via effects on brown adipogenesis, sympathetic nervous outflow to brown adipose tissue, spontaneous activity and energy expenditure in skeletal muscle. In case of murine coronavirus (MHV) infection, does probably not serve as functional receptor for the virus. Its function is as follows. Isoform 2 may be an adhesion molecule contributing to cell to cell adhesion between elongating spermatids and Sertoli cells within the seminiferous epithelium. This is Cell adhesion molecule CEACAM2 from Mus musculus (Mouse).